A 377-amino-acid polypeptide reads, in one-letter code: Actin-related protein T2 (377 aa).

This sequence belongs to the actin family.

It is found in the cytoplasm. It localises to the cytoskeleton. The polypeptide is Actin-related protein T2 (Actrt2) (Mus musculus (Mouse)).